The following is a 100-amino-acid chain: Urease subunit gamma (100 aa).

It belongs to the urease gamma subunit family. As to quaternary structure, heterotrimer of UreA (gamma), UreB (beta) and UreC (alpha) subunits. Three heterotrimers associate to form the active enzyme.

It is found in the cytoplasm. The enzyme catalyses urea + 2 H2O + H(+) = hydrogencarbonate + 2 NH4(+). It functions in the pathway nitrogen metabolism; urea degradation; CO(2) and NH(3) from urea (urease route): step 1/1. This chain is Urease subunit gamma, found in Allorhizobium ampelinum (strain ATCC BAA-846 / DSM 112012 / S4) (Agrobacterium vitis (strain S4)).